The chain runs to 236 residues: MNSLSFLNHEFEAFPSPELALTDPNGLLAIGGDLRPERLLTAYYHGIFPWFNADDPILWWSPDPRAIFIPGQVNISTSLRKYLKKQPWRFTINHAFTDVMAGCAQPRRKQAGTWITHEIQMAYRELHHNGHAHSVEVWHGERLIGGLYGIAIGQVFCGESMFHRETNASKAAMAVLQQHLIKMNFKLIDAQVMNPHLESLGAKPVKRADFIQLLTQFRDKPVNPAAWIPSEVTLEL.

It belongs to the L/F-transferase family.

The protein localises to the cytoplasm. The catalysed reaction is N-terminal L-lysyl-[protein] + L-leucyl-tRNA(Leu) = N-terminal L-leucyl-L-lysyl-[protein] + tRNA(Leu) + H(+). The enzyme catalyses N-terminal L-arginyl-[protein] + L-leucyl-tRNA(Leu) = N-terminal L-leucyl-L-arginyl-[protein] + tRNA(Leu) + H(+). It carries out the reaction L-phenylalanyl-tRNA(Phe) + an N-terminal L-alpha-aminoacyl-[protein] = an N-terminal L-phenylalanyl-L-alpha-aminoacyl-[protein] + tRNA(Phe). Its function is as follows. Functions in the N-end rule pathway of protein degradation where it conjugates Leu, Phe and, less efficiently, Met from aminoacyl-tRNAs to the N-termini of proteins containing an N-terminal arginine or lysine. In Shewanella sp. (strain ANA-3), this protein is Leucyl/phenylalanyl-tRNA--protein transferase.